Consider the following 503-residue polypeptide: Maturase K (503 aa).

It belongs to the intron maturase 2 family. MatK subfamily.

It is found in the plastid. The protein resides in the chloroplast. Its function is as follows. Usually encoded in the trnK tRNA gene intron. Probably assists in splicing its own and other chloroplast group II introns. This Kunzea baxteri (Scarlet kunzea) protein is Maturase K.